We begin with the raw amino-acid sequence, 413 residues long: 2,3-diketo-5-methylthiopentyl-1-phosphate enolase (413 aa).

The active-site Proton acceptor is the Lys-98. Substrate is bound by residues Lys-147, 173–176 (KDDE), His-264, Gly-337, and 359–360 (GG). Mg(2+) is bound by residues Lys-173, Asp-175, and Glu-176. Position 173 is an N6-carboxylysine (Lys-173).

This sequence belongs to the RuBisCO large chain family. Type IV subfamily. In terms of assembly, homodimer. Mg(2+) is required as a cofactor.

The enzyme catalyses 5-methylsulfanyl-2,3-dioxopentyl phosphate = 2-hydroxy-5-methylsulfanyl-3-oxopent-1-enyl phosphate. It functions in the pathway amino-acid biosynthesis; L-methionine biosynthesis via salvage pathway; L-methionine from S-methyl-5-thio-alpha-D-ribose 1-phosphate: step 3/6. In terms of biological role, catalyzes the enolization of 2,3-diketo-5-methylthiopentyl-1-phosphate (DK-MTP-1-P) into 2-hydroxy-3-keto-5-methylthiopentenyl-1-phosphate (HK-MTPenyl-1-P). The protein is 2,3-diketo-5-methylthiopentyl-1-phosphate enolase of Geobacillus thermodenitrificans (strain NG80-2).